Consider the following 400-residue polypeptide: NAD-dependent protein deacetylase sirtuin-7 (400 aa).

Residues 1-28 (MAAGGLSRSERKAAERVRRLREEQQRER) form a disordered region. Residues 8–28 (RSERKAAERVRRLREEQQRER) are compositionally biased toward basic and acidic residues. Residues 82-329 (PEELQRKVRE…QLLMDELGLE (248 aa)) enclose the Deacetylase sirtuin-type domain. Residues 107–126 (GAGI…NGVW) and 167–170 (QNCD) each bind NAD(+). The Proton acceptor role is filled by H187. Residues C195, C198, C225, and C228 each coordinate Zn(2+). NAD(+) is bound by residues 268–270 (GSS), 297–299 (NLQ), and C315. A disordered region spans residues 354 to 380 (SHSRKSLCRSREEPGPGDRGAPLSSAP). R388 bears the Asymmetric dimethylarginine; alternate mark. At R388 the chain carries Omega-N-methylarginine; alternate.

This sequence belongs to the sirtuin family. Class IV subfamily. In terms of assembly, interacts with UBTF and the RNA polymerase I complex. Interacts with components of the B-WICH complex, such as MYBBP1A, SMARCA5/SNF2H and BAZ1B/WSTF. Interacts with ELK4, leading to stabilization at target promoters for H3K18Ac deacetylation. Interacts with histone H2A and/or histone H2B. Interacts with DNMT1. Interacts with SIRT1. It depends on Zn(2+) as a cofactor. Post-translationally, phosphorylated during mitosis. In terms of processing, methylation at Arg-388 by PRMT6 inhibits the H3K18Ac histone deacetylase activity, promoting mitochondria biogenesis and maintaining mitochondria respiration. Ubiquitinated via 'Lys-63'-linked ubiquitin chains. Deubiquitinated by USP7, inhibiting the H3K18Ac histone deacetylase activity and regulating gluconeogenesis. Ubiquitinated by E3 ubiquitin-protein ligase complex containing FBXO7; leading to proteasomal degradation.

The protein resides in the nucleus. It localises to the nucleolus. It is found in the nucleoplasm. The protein localises to the chromosome. Its subcellular location is the cytoplasm. It carries out the reaction N(6)-acetyl-L-lysyl-[protein] + NAD(+) + H2O = 2''-O-acetyl-ADP-D-ribose + nicotinamide + L-lysyl-[protein]. The catalysed reaction is N(6)-glutaryl-L-lysyl-[protein] + NAD(+) + H2O = 2''-O-glutaryl-ADP-D-ribose + nicotinamide + L-lysyl-[protein]. It catalyses the reaction N(6)-succinyl-L-lysyl-[protein] + NAD(+) + H2O = 2''-O-succinyl-ADP-D-ribose + nicotinamide + L-lysyl-[protein]. The enzyme catalyses N(6)-propanoyl-L-lysyl-[protein] + NAD(+) + H2O = 3''-O-propanoyl-ADP-D-ribose + nicotinamide + L-lysyl-[protein]. It carries out the reaction N(6)-decanoyl-L-lysyl-[protein] + NAD(+) + H2O = 2''-O-decanoyl-ADP-D-ribose + nicotinamide + L-lysyl-[protein]. With respect to regulation, NAD-dependent protein-lysine deacetylase and deacylase activities are activated by nucleic acids. Histone deacetylase activity is activated by DNA. Protein-lysine deacylase activity is activated by RNA. H3K18Ac histone deacetylase activity is inhibited by methylation at Arg-388. H3K18Ac histone deacetylase activity is inhibited by deubiquitination by USP7. In terms of biological role, NAD-dependent protein-lysine deacylase that can act both as a deacetylase or deacylase (desuccinylase, depropionylase, deglutarylase and dedecanoylase), depending on the context. Specifically mediates deacetylation of histone H3 at 'Lys-18' (H3K18Ac). In contrast to other histone deacetylases, displays strong preference for a specific histone mark, H3K18Ac, directly linked to control of gene expression. H3K18Ac is mainly present around the transcription start site of genes and has been linked to activation of nuclear hormone receptors; SIRT7 thereby acts as a transcription repressor. Moreover, H3K18 hypoacetylation has been reported as a marker of malignancy in various cancers and seems to maintain the transformed phenotype of cancer cells. Also able to mediate deacetylation of histone H3 at 'Lys-36' (H3K36Ac) in the context of nucleosomes. Also mediates deacetylation of non-histone proteins, such as ATM, CDK9, DDX21, DDB1, FBL, FKBP5/FKBP51, GABPB1, RAN, RRP9/U3-55K and POLR1E/PAF53. Enriched in nucleolus where it stimulates transcription activity of the RNA polymerase I complex. Acts by mediating the deacetylation of the RNA polymerase I subunit POLR1E/PAF53, thereby promoting the association of RNA polymerase I with the rDNA promoter region and coding region. In response to metabolic stress, SIRT7 is released from nucleoli leading to hyperacetylation of POLR1E/PAF53 and decreased RNA polymerase I transcription. Required to restore the transcription of ribosomal RNA (rRNA) at the exit from mitosis. Promotes pre-ribosomal RNA (pre-rRNA) cleavage at the 5'-terminal processing site by mediating deacetylation of RRP9/U3-55K, a core subunit of the U3 snoRNP complex. Mediates 'Lys-37' deacetylation of Ran, thereby regulating the nuclear export of NF-kappa-B subunit RELA/p65. Acts as a regulator of DNA damage repair by mediating deacetylation of ATM during the late stages of DNA damage response, promoting ATM dephosphorylation and deactivation. Suppresses the activity of the DCX (DDB1-CUL4-X-box) E3 ubiquitin-protein ligase complexes by mediating deacetylation of DDB1, which prevents the interaction between DDB1 and CUL4 (CUL4A or CUL4B). Activates RNA polymerase II transcription by mediating deacetylation of CDK9, thereby promoting 'Ser-2' phosphorylation of the C-terminal domain (CTD) of RNA polymerase II. Deacetylates FBL, promoting histone-glutamine methyltransferase activity of FBL. Acts as a regulator of mitochondrial function by catalyzing deacetylation of GABPB1. Regulates Akt/AKT1 activity by mediating deacetylation of FKBP5/FKBP51. Required to prevent R-loop-associated DNA damage and transcription-associated genomic instability by mediating deacetylation and subsequent activation of DDX21, thereby overcoming R-loop-mediated stalling of RNA polymerases. In addition to protein deacetylase activity, also acts as a protein-lysine deacylase. Acts as a protein depropionylase by mediating depropionylation of Osterix (SP7), thereby regulating bone formation by osteoblasts. Acts as a histone deglutarylase by mediating deglutarylation of histone H4 on 'Lys-91' (H4K91glu); a mark that destabilizes nucleosomes by promoting dissociation of the H2A-H2B dimers from nucleosomes. Acts as a histone desuccinylase: in response to DNA damage, recruited to DNA double-strand breaks (DSBs) and catalyzes desuccinylation of histone H3 on 'Lys-122' (H3K122succ), thereby promoting chromatin condensation and DSB repair. Also promotes DSB repair by promoting H3K18Ac deacetylation, regulating non-homologous end joining (NHEJ). Along with its role in DNA repair, required for chromosome synapsis during prophase I of female meiosis by catalyzing H3K18Ac deacetylation. Involved in transcriptional repression of LINE-1 retrotransposon via H3K18Ac deacetylation, and promotes their association with the nuclear lamina. Required to stabilize ribosomal DNA (rDNA) heterochromatin and prevent cellular senescence induced by rDNA instability. Acts as a negative regulator of SIRT1 by preventing autodeacetylation of SIRT1, restricting SIRT1 deacetylase activity. This chain is NAD-dependent protein deacetylase sirtuin-7 (SIRT7), found in Bos taurus (Bovine).